Consider the following 458-residue polypeptide: Ammonium transporter Rh type B (458 aa).

Residues 1–13 (MAKSPRRVAGRRL) lie on the Cytoplasmic side of the membrane. Residues 14–34 (LLPLLCLFFQGATAILFAIFV) form a helical membrane-spanning segment. Topologically, residues 35–61 (RYDQQTDAALWHGGNHSNADNEFYFRY) are extracellular. N49 carries N-linked (GlcNAc...) asparagine glycosylation. The chain crosses the membrane as a helical span at residues 62–82 (PSFQDVHAMVFVGFGFLMVFL). Residues 83 to 86 (QRYG) lie on the Cytoplasmic side of the membrane. Residues 87 to 107 (YSSLGFTFLLGAFALQWATLV) form a helical membrane-spanning segment. Residues 108–124 (QGFLHSFHGGHIHVGME) lie on the Extracellular side of the membrane. A helical membrane pass occupies residues 125–145 (SLINADFCAGAVLISFGAVLG). Over 146 to 149 (KTGP) the chain is Cytoplasmic. A helical transmembrane segment spans residues 150–170 (AQLLLMALLEVALFGLNEFVL). Over 171–178 (LCLLGVRD) the chain is Extracellular. The chain crosses the membrane as a helical span at residues 179-201 (AGGSMTIHTFGAYFGLVLSRVLY). The Cytoplasmic portion of the chain corresponds to 202–219 (RPHLEKSQHRQGSVYHSD). The helical transmembrane segment at 220–240 (LFAMIGTIFLWIFWPSFNSAL) threads the bilayer. Over 241-251 (TSRGDGQPRTA) the chain is Extracellular. The chain crosses the membrane as a helical span at residues 252-272 (LNTYYSLTASTLSTFALSALV). The Cytoplasmic portion of the chain corresponds to 273–282 (GKDGRLDMVH). The chain crosses the membrane as a helical span at residues 283–303 (VQNAALAGGVVVGTASEMMLT). A topological domain (extracellular) is located at residue P304. A helical membrane pass occupies residues 305 to 325 (FGALAAGCLAGAISTLGYKFF). At 326–346 (TPILESKLKIQDTCGVHNLHG) the chain is on the cytoplasmic side. The helical transmembrane segment at 347-367 (MPGVLGALLGALMTGLTTHEA) threads the bilayer. Over 368-393 (YGDGLQSVFPLIAEGQRSATSQAIYQ) the chain is Extracellular. The chain crosses the membrane as a helical span at residues 394-414 (LFGLSVTLLFASAGGVLGGLL). Topologically, residues 415–458 (LKLPFLDAPPDSQCYEDQMCWEVPGEHGYEAQEALRVEEPDTEA) are cytoplasmic. Positions 416-424 (KLPFLDAPP) are interaction with ANK3. Positions 429–432 (YEDQ) match the Basolateral sorting signal motif.

It belongs to the ammonium transporter (TC 2.A.49) family. Rh subfamily. In terms of assembly, interacts (via C-terminus) with ANK2 and ANK3; required for targeting to the basolateral membrane. In terms of processing, N-glycosylated.

Its subcellular location is the cell membrane. The protein resides in the basolateral cell membrane. The catalysed reaction is NH4(+)(in) = NH4(+)(out). It catalyses the reaction methylamine(out) = methylamine(in). The enzyme catalyses CO2(out) = CO2(in). In terms of biological role, ammonium transporter involved in the maintenance of acid-base homeostasis. Transports ammonium and its related derivative methylammonium across the basolateral plasma membrane of epithelial cells likely contributing to renal transepithelial ammonia transport and ammonia metabolism. May transport either NH4(+) or NH3 ammonia species predominantly mediating an electrogenic NH4(+) transport. May act as a CO2 channel providing for renal acid secretion. This chain is Ammonium transporter Rh type B (RHBG), found in Oryctolagus cuniculus (Rabbit).